An 875-amino-acid polypeptide reads, in one-letter code: Valine--tRNA ligase (875 aa).

The short motif at 41-51 (PNVTGSLHMGH) is the 'HIGH' region element. The 'KMSKS' region signature appears at 525-529 (KMSKS). Position 528 (K528) interacts with ATP. Residues 810–875 (VDLELIKKNL…ERISITIKGL (66 aa)) adopt a coiled-coil conformation.

Belongs to the class-I aminoacyl-tRNA synthetase family. ValS type 1 subfamily. In terms of assembly, monomer.

The protein localises to the cytoplasm. The catalysed reaction is tRNA(Val) + L-valine + ATP = L-valyl-tRNA(Val) + AMP + diphosphate. Catalyzes the attachment of valine to tRNA(Val). As ValRS can inadvertently accommodate and process structurally similar amino acids such as threonine, to avoid such errors, it has a 'posttransfer' editing activity that hydrolyzes mischarged Thr-tRNA(Val) in a tRNA-dependent manner. The sequence is that of Valine--tRNA ligase from Pelagibacter ubique (strain HTCC1062).